Reading from the N-terminus, the 239-residue chain is Probable transcriptional regulatory protein lin0388 (239 aa).

It belongs to the TACO1 family. YeeN subfamily.

Its subcellular location is the cytoplasm. The sequence is that of Probable transcriptional regulatory protein lin0388 from Listeria innocua serovar 6a (strain ATCC BAA-680 / CLIP 11262).